The following is a 275-amino-acid chain: Enoyl-[acyl-carrier-protein] reductase [NADH] FabI (275 aa).

Residues G13, 19–20 (SI), 64–65 (DV), and V92 contribute to the NAD(+) site. Position 95 (A95) interacts with substrate. Residues Y145 and Y155 each act as proton acceptor in the active site. NAD(+) is bound by residues K162 and 191–195 (IRTLA).

Belongs to the short-chain dehydrogenases/reductases (SDR) family. FabI subfamily. In terms of assembly, homotetramer.

It carries out the reaction a 2,3-saturated acyl-[ACP] + NAD(+) = a (2E)-enoyl-[ACP] + NADH + H(+). It functions in the pathway lipid metabolism; fatty acid biosynthesis. Catalyzes the reduction of a carbon-carbon double bond in an enoyl moiety that is covalently linked to an acyl carrier protein (ACP). Involved in the elongation cycle of fatty acid which are used in the lipid metabolism. The sequence is that of Enoyl-[acyl-carrier-protein] reductase [NADH] FabI (fabI) from Helicobacter pylori (strain ATCC 700392 / 26695) (Campylobacter pylori).